A 371-amino-acid chain; its full sequence is Glutamate 5-kinase (371 aa).

Position 12 (lysine 12) interacts with ATP. Substrate is bound by residues serine 52, aspartate 136, and asparagine 148. Residues 168 to 169 (SD) and 210 to 216 (TGGMRTK) each bind ATP. One can recognise a PUA domain in the interval 275–354 (QGEILVDEGA…EDIAEKFGYS (80 aa)).

The protein belongs to the glutamate 5-kinase family.

It is found in the cytoplasm. The enzyme catalyses L-glutamate + ATP = L-glutamyl 5-phosphate + ADP. It participates in amino-acid biosynthesis; L-proline biosynthesis; L-glutamate 5-semialdehyde from L-glutamate: step 1/2. Its function is as follows. Catalyzes the transfer of a phosphate group to glutamate to form L-glutamate 5-phosphate. This chain is Glutamate 5-kinase, found in Idiomarina loihiensis (strain ATCC BAA-735 / DSM 15497 / L2-TR).